A 92-amino-acid polypeptide reads, in one-letter code: Small ribosomal subunit protein uS19 (92 aa).

This sequence belongs to the universal ribosomal protein uS19 family.

In terms of biological role, protein S19 forms a complex with S13 that binds strongly to the 16S ribosomal RNA. The protein is Small ribosomal subunit protein uS19 of Macrococcus caseolyticus (strain JCSC5402) (Macrococcoides caseolyticum).